A 2249-amino-acid chain; its full sequence is MANISPKLFKKAIQQGLKAALFTTSTAAIMLSSSGALGVATGVIATNNNAAFSNNVGNNNWNEITAAGVANGTPAGGPQNNWAFTYGGDYTVTADAADRIIKAINVAGTTPVGLNITQNTVVGSIITKGNLLPVTLNAGKSLTLNGNNAVAANHGFDAPADNYTGLGNIALGGANAALIIQSAAPSKITLAGNIDGGGIITVKTDAAINGTIGNTNALATVNVGAGTATLGGAVIKATTTKLTNAASVLTLTNANAVLTGAIDNTTGGDNVGVLNLNGALSQVTGDIGNTNSLATISVGAGTATLGGAVIKATTTKLTDAASAVKFTNPVVVTGAIDNTGNANNGIVTFTGNSTVTGNVGNTNALATVNVGAGLLQVQGGVVKANTINLTDNASAVTFTNPVVVTGAIDNTGNANNGIVTFTGNSTVTGDIGNTNALATVNVGAGTATLGGAVIKATTTKLTNAASVLTLTNANAVLTGAIDNTTGGDNVGVLNLNGALSQVTGNIGNTNSLATISVGAGTATLGGAVIKATTTKLTDAASAVKFTNPVVVTGAIDNTGNANNGIVTFTGNSTVTGDIGNTNSLATISVGAGTATLGGAVIKATTTKLTNAASVLTLTNANAVLTGAIDNTTGGDNVGVLNLNGALSQVTGDIGNTNSLATISVGAGTATLGGAVIKATTTKITNAVSAVKFTNPVVVTGAIDSTGNANNGIVTFTGNSTVTGDIGNTNALATVNVGAGTATLGGAVIKATTTKLTNAASVLTLTNANAVLTGAIDNTTGGDNVGVLNLNGALSQVTGDIGNTNSLATISVGAGTATLGGAVIKATTTKLTNAASVLTLTNANAVLTGAVDNTTGGDNVGVLNLNGALSQVTGDIGNTNSLATISVGAGTATLGGAVIKATTTKLTNAASVLTLTNANAVLTGAIDNTTGGDNVGVLNLNGALSQVTGDIGNTNSLATISVGAGTATLGGAVIKATTTKLTDAASAVKFTNPVVVTGAIDNTGNANNGIVTFTGNSTVTGNVGNTNALATVNVGAGLLQVQGGVVKANTINLTDNASAVTFTNPVVVTGAIDNTGNANNGIVTFTGNSTVTGNVGNTNALATVNVGAGLLQVQGGVVKANTINLTDNASAVTFTNPVVVTGAIDNTGNANNGIVTFTGNSTVTGDIGNTNALATVNVGAGITLQAGGSLAANNIDFGARSTLEFNGPLDGGGKAIPYYFKGAIANGNNAILNVNTKLLTASHLTIGTVAEINIGAGNLFTIDASVGDVTILNAQNINFRARDSVLVLSNLTGVGVNNILLAADLVAPGADEGTVVFNGGVNGLNVGSNVAGTARNIGDGGGNKFNTLLIYNAVTITDDVNLEGIQNVLINKNADFTSSTAFNAGAIQINDATYTIDANNGNLNIPAGNIQFAHADAQLVLQNSSGNDRTITLGANIDPDNDDEGIVILNSVTAGKKLTIAGGKTFGGAHKLQTILFKGAGDCSTAGTTFNTTNIVLDITGQLELGATTANVVLFNDAVQLTQTGNIGGFLDFNAKNGMVTLNNNVNVAGAVQNTGGTNNGTLIVLGASNLNRVNGIAMLKVGAGNVTIAKGGKVKIGEIQGTGTNTLTLPAHFNLTGSINKTGGQALKLNFMNGGSVSGVVGTAANSVGDITTAGATSFASSVNAKGTATLGGTTSFANTFTNTGAVTLAKGSITSFAKNVTATSFVANSATINFSNSLAFNSNITGGGTTLTLGANQVTYTGTGSFTDTLTLNTTFDGAAKSGGNILIKSGSTLDLSGVSTLALVVTATNFDMNNISPDTKYTVISAETAGGLKPTSKENVKITINNDNRFVDFTFDASTLTLFAEDIAADVIDGDFAPGGPLANIPNAANIKKSLELMEDAPNGSDARQAFNNFGLMTPLQEADATTHLIQDVVKPSDTIAAVNNQVVASNISSNITALNARMDKVQSGNKGPVSSGDEDMDAKFGAWISPFVGNATQKMCNSISGYKSDTTGGTIGFDGFVSDDLALGLAYTRADTDIKLKNNKTGDKNKVESNIYSLYGLYNVPYENLFVEAIASYSDNKIRSKSRRVIATTLETVGYQTANGKYKSESYTGQLMAGYTYMMPENINLTPLAGLRYSTIKDKGYKETGTTYQNLTVKGKNYNTFDGLLGAKVSSNINVNEIVLTPELYAMVDYAFKNKVSAIDARLQGMTAPLPTNSFKQSKTSFDVGVGVTAKHKMMEYRINYDTNIGSKYFAQQGSVKVRVNF.

The signal sequence occupies residues 1–28 (MANISPKLFKKAIQQGLKAALFTTSTAA). The stretch at 212–286 (IGNTNALATV…NGALSQVTGD (75 aa)) is one Type I 1 repeat. A 14 X approximate tandem repeats region spans residues 212-1180 (IGNTNALATV…ALATVNVGAG (969 aa)). 2 Type II repeats span residues 287–358 (IGNT…VTGN) and 359–430 (VGNT…VTGD). Residues 431-505 (IGNTNALATV…NGALSQVTGN (75 aa)) form a Type I 2 repeat. One copy of the Type II 3 repeat lies at 506 to 577 (IGNTNSLATI…FTGNSTVTGD (72 aa)). A Type I 3 repeat occupies 578–652 (IGNTNSLATI…NGALSQVTGD (75 aa)). One copy of the Type II 4 repeat lies at 653–724 (IGNTNSLATI…FTGNSTVTGD (72 aa)). Type I repeat units follow at residues 725–799 (IGNT…VTGD), 800–874 (IGNT…VTGD), and 875–949 (IGNT…VTGD). 3 Type II repeats span residues 950–1021 (IGNT…VTGN), 1022–1093 (VGNT…VTGN), and 1094–1165 (VGNT…VTGD). The Type I 7; truncated repeat unit spans residues 1166-1180 (IGNTNALATVNVGAG). The region spanning 1962 to 2249 (DMDAKFGAWI…QGSVKVRVNF (288 aa)) is the Autotransporter domain.

This sequence belongs to the rickettsiae OmpA/OmpB family. Post-translationally, glycosylated.

It is found in the periplasm. It localises to the secreted. The protein localises to the cell surface. The protein resides in the cell outer membrane. Elicits protective immunity. The chain is Outer membrane protein A (ompA) from Rickettsia rickettsii.